We begin with the raw amino-acid sequence, 107 residues long: Large ribosomal subunit protein uL24 (107 aa).

This sequence belongs to the universal ribosomal protein uL24 family. In terms of assembly, part of the 50S ribosomal subunit.

One of two assembly initiator proteins, it binds directly to the 5'-end of the 23S rRNA, where it nucleates assembly of the 50S subunit. In terms of biological role, one of the proteins that surrounds the polypeptide exit tunnel on the outside of the subunit. The polypeptide is Large ribosomal subunit protein uL24 (Malacoplasma penetrans (strain HF-2) (Mycoplasma penetrans)).